The sequence spans 572 residues: Glutamate--tRNA ligase (572 aa).

A 'HIGH' region motif is present at residues 107 to 117 (PNPDGAFHLGN).

It belongs to the class-I aminoacyl-tRNA synthetase family. Glutamate--tRNA ligase type 2 subfamily.

It localises to the cytoplasm. It catalyses the reaction tRNA(Glu) + L-glutamate + ATP = L-glutamyl-tRNA(Glu) + AMP + diphosphate. Catalyzes the attachment of glutamate to tRNA(Glu) in a two-step reaction: glutamate is first activated by ATP to form Glu-AMP and then transferred to the acceptor end of tRNA(Glu). This Pyrococcus furiosus (strain ATCC 43587 / DSM 3638 / JCM 8422 / Vc1) protein is Glutamate--tRNA ligase.